Consider the following 222-residue polypeptide: DnaJ homolog subfamily B member 9 (222 aa).

The N-terminal stretch at 1–23 (MATPQSVFVFAICILMITELILA) is a signal peptide. Positions 26–90 (NYYDILGVPK…NRRKEYDIIG (65 aa)) constitute a J domain. Positions 91 to 222 (HSAFTNGKGQ…VTTYTDCSGQ (132 aa)) are divergent targeting domain. Phosphoserine is present on serine 133.

In terms of assembly, interacts with HSPA5/BiP; interaction is direct. Interacts with ERN1/IRE1 (via the luminal region). Interacts with DERL1.

The protein localises to the endoplasmic reticulum lumen. Co-chaperone for Hsp70 protein HSPA5/BiP that acts as a key repressor of the ERN1/IRE1-mediated unfolded protein response (UPR). J domain-containing co-chaperones stimulate the ATPase activity of Hsp70 proteins and are required for efficient substrate recognition by Hsp70 proteins. In the unstressed endoplasmic reticulum, interacts with the luminal region of ERN1/IRE1 and selectively recruits HSPA5/BiP: HSPA5/BiP disrupts the dimerization of the active ERN1/IRE1 luminal region, thereby inactivating ERN1/IRE1. Also involved in endoplasmic reticulum-associated degradation (ERAD) of misfolded proteins. Required for survival of B-cell progenitors and normal antibody production. This chain is DnaJ homolog subfamily B member 9, found in Rattus norvegicus (Rat).